Reading from the N-terminus, the 173-residue chain is L-2,4-diaminobutyric acid acetyltransferase (173 aa).

The N-acetyltransferase domain maps to 14 to 170 (WVFRRPTQED…TEYLYRIPLQ (157 aa)).

This sequence belongs to the acetyltransferase family. EctA subfamily.

It catalyses the reaction L-2,4-diaminobutanoate + acetyl-CoA = (2S)-4-acetamido-2-aminobutanoate + CoA + H(+). Its pathway is amine and polyamine biosynthesis; ectoine biosynthesis; L-ectoine from L-aspartate 4-semialdehyde: step 2/3. Catalyzes the acetylation of L-2,4-diaminobutyrate (DABA) to gamma-N-acetyl-alpha,gamma-diaminobutyric acid (ADABA) with acetyl coenzyme A. In Vibrio cholerae serotype O1 (strain ATCC 39315 / El Tor Inaba N16961), this protein is L-2,4-diaminobutyric acid acetyltransferase (ectA).